The primary structure comprises 323 residues: Cytosolic sulfotransferase 5 (323 aa).

69 to 74 (KCGTTW) is a 3'-phosphoadenylyl sulfate binding site. Residue H135 is the Proton acceptor of the active site. 3'-phosphoadenylyl sulfate-binding positions include R157, S165, and 289-291 (RKG).

This sequence belongs to the sulfotransferase 1 family. As to expression, expressed in inflorescence stems, roots and siliques.

It is found in the cytoplasm. Sulfotransferase that utilizes 3'-phospho-5'-adenylyl sulfate (PAPS) as sulfonate donor to specifically catalyze the sulfate conjugation of flavones and flavonols. Strictly specific for the position 7. Substrate preference is kaempferol 3-sulfate &gt; isorhamnetin &gt; kaempferol. The sequence is that of Cytosolic sulfotransferase 5 (SOT5) from Arabidopsis thaliana (Mouse-ear cress).